We begin with the raw amino-acid sequence, 423 residues long: Probable WRKY transcription factor 58 (423 aa).

3 disordered regions span residues 91 to 128 (SSAH…AVHG), 142 to 171 (RNHY…DGYN), and 215 to 284 (IYKG…GVST). 2 stretches are compositionally biased toward low complexity: residues 99–111 (QPRQ…PQRP) and 144–162 (HYNN…VVNV). Positions 161 to 225 (NVDKPADDGY…YKGQHDHERP (65 aa)) form a DNA-binding region, WRKY 1. Residues 259 to 271 (DDDDDDDEDDEDL) are compositionally biased toward acidic residues. The segment at residues 300–365 (SEVDLLDDGY…YEGKHNHDVP (66 aa)) is a DNA-binding region (WRKY 2).

It localises to the nucleus. Functionally, transcription factor. Interacts specifically with the W box (5'-(T)TGAC[CT]-3'), a frequently occurring elicitor-responsive cis-acting element. This is Probable WRKY transcription factor 58 (WRKY58) from Arabidopsis thaliana (Mouse-ear cress).